A 286-amino-acid chain; its full sequence is Citrullinase (286 aa).

Residues 4-258 (IKVAVVQLSF…DDILYATFDF (255 aa)) form the CN hydrolase domain. E43 (proton acceptor) is an active-site residue. K116 is an active-site residue. C153 (nucleophile) is an active-site residue.

This sequence belongs to the carbon-nitrogen hydrolase superfamily.

The enzyme catalyses L-citrulline + H2O + 2 H(+) = L-ornithine + NH4(+) + CO2. Its function is as follows. Catalyzes the degradation of citrulline into ornithine, carbon dioxide and ammonia. Contributes to intramacrophage survival, in vivo growth and pathogenesis. The protein is Citrullinase of Francisella tularensis subsp. tularensis (strain SCHU S4 / Schu 4).